The sequence spans 407 residues: Phosphopentomutase (407 aa).

6 residues coordinate Mn(2+): Asp-10, Asp-306, His-311, Asp-347, His-348, and His-359.

It belongs to the phosphopentomutase family. Requires Mn(2+) as cofactor.

The protein localises to the cytoplasm. It carries out the reaction 2-deoxy-alpha-D-ribose 1-phosphate = 2-deoxy-D-ribose 5-phosphate. The catalysed reaction is alpha-D-ribose 1-phosphate = D-ribose 5-phosphate. It participates in carbohydrate degradation; 2-deoxy-D-ribose 1-phosphate degradation; D-glyceraldehyde 3-phosphate and acetaldehyde from 2-deoxy-alpha-D-ribose 1-phosphate: step 1/2. In terms of biological role, isomerase that catalyzes the conversion of deoxy-ribose 1-phosphate (dRib-1-P) and ribose 1-phosphate (Rib-1-P) to deoxy-ribose 5-phosphate (dRib-5-P) and ribose 5-phosphate (Rib-5-P), respectively. This Edwardsiella ictaluri (strain 93-146) protein is Phosphopentomutase.